The sequence spans 508 residues: GMP synthase [glutamine-hydrolyzing] (508 aa).

One can recognise a Glutamine amidotransferase type-1 domain in the interval Met-1–Thr-189. Residue Cys-78 is the Nucleophile of the active site. Active-site residues include His-163 and Glu-165. Residues Trp-190–Arg-383 enclose the GMPS ATP-PPase domain. Ser-217–Thr-223 serves as a coordination point for ATP.

Homodimer.

It catalyses the reaction XMP + L-glutamine + ATP + H2O = GMP + L-glutamate + AMP + diphosphate + 2 H(+). It functions in the pathway purine metabolism; GMP biosynthesis; GMP from XMP (L-Gln route): step 1/1. Its function is as follows. Catalyzes the synthesis of GMP from XMP. The chain is GMP synthase [glutamine-hydrolyzing] from Helicobacter pylori (strain HPAG1).